A 428-amino-acid chain; its full sequence is AP2-like ethylene-responsive transcription factor At2g41710 (428 aa).

Over residues 1 to 10 the composition is skewed to polar residues; that stretch reads MASVSSSDQG. The disordered stretch occupies residues 1-28; the sequence is MASVSSSDQGPKTEAGCSGGGGGESSET. Residues 70-136 constitute a DNA-binding region (AP2/ERF); that stretch reads IYRGVTRHRW…WGPGTLINFP (67 aa).

This sequence belongs to the AP2/ERF transcription factor family. AP2 subfamily.

The protein localises to the nucleus. In terms of biological role, probably acts as a transcriptional activator. Binds to the GCC-box pathogenesis-related promoter element. May be involved in the regulation of gene expression by stress factors and by components of stress signal transduction pathways. The polypeptide is AP2-like ethylene-responsive transcription factor At2g41710 (Arabidopsis thaliana (Mouse-ear cress)).